A 127-amino-acid chain; its full sequence is Fatty acid-binding protein, liver (127 aa).

An N-acetylmethionine modification is found at Met-1. Ser-11 is subject to Phosphoserine. N6-succinyllysine is present on residues Lys-31 and Lys-36. A Phosphoserine modification is found at Ser-39. Lys-46 bears the N6-succinyllysine mark. Thr-51 carries the post-translational modification Phosphothreonine. A Phosphoserine modification is found at Ser-56. N6-succinyllysine is present on residues Lys-57, Lys-78, and Lys-90. Ser-100 carries the phosphoserine modification. Lys-121 bears the N6-succinyllysine mark.

The protein belongs to the calycin superfamily. Fatty-acid binding protein (FABP) family. As to quaternary structure, monomer.

The protein resides in the cytoplasm. Plays a role in lipoprotein-mediated cholesterol uptake in hepatocytes. Binds cholesterol. Binds free fatty acids and their coenzyme A derivatives, bilirubin, and some other small molecules in the cytoplasm. May be involved in intracellular lipid transport. The sequence is that of Fatty acid-binding protein, liver (FABP1) from Sus scrofa (Pig).